A 72-amino-acid polypeptide reads, in one-letter code: MRRLVLLLAISLLLYQDLPVRSEFELDRICGYGTARCRKKCRSQEYRIGRCPNTYACCLRKWDESLLNRTKP.

The N-terminal stretch at 1–22 is a signal peptide; that stretch reads MRRLVLLLAISLLLYQDLPVRS. Disulfide bonds link cysteine 30-cysteine 57, cysteine 37-cysteine 51, and cysteine 41-cysteine 58.

The protein belongs to the beta-defensin family.

It localises to the secreted. Functionally, has antimicrobial activity. The sequence is that of Beta-defensin 104A (DEFB104A) from Pongo pygmaeus (Bornean orangutan).